A 218-amino-acid polypeptide reads, in one-letter code: Small ribosomal subunit protein uS3 (218 aa).

In terms of domain architecture, KH type-2 spans 39–107; sequence IRDYIKSKLL…QISINIVEIK (69 aa).

This sequence belongs to the universal ribosomal protein uS3 family. In terms of assembly, part of the 30S ribosomal subunit. Forms a tight complex with proteins S10 and S14.

Binds the lower part of the 30S subunit head. Binds mRNA in the 70S ribosome, positioning it for translation. This Desulforudis audaxviator (strain MP104C) protein is Small ribosomal subunit protein uS3.